A 211-amino-acid polypeptide reads, in one-letter code: Middle transcription regulatory protein motA (211 aa).

A DNA-binding region (H-T-H motif) is located at residues 23-42 (LITIAKKDFITAAEVREVHP).

Its function is as follows. Required for the transcriptional activation of middle promoters. Middle promoters are characterized by the presence of the conserved sequence [AT]3TGCTTNA (MotA box). MotA binds directly to MotA boxes. In Enterobacteria phage T4 (Bacteriophage T4), this protein is Middle transcription regulatory protein motA (motA).